The primary structure comprises 500 residues: L-arabinose isomerase (500 aa).

Residues E306, E333, H349, and H448 each contribute to the Mn(2+) site.

This sequence belongs to the arabinose isomerase family. It depends on Mn(2+) as a cofactor.

The enzyme catalyses beta-L-arabinopyranose = L-ribulose. The protein operates within carbohydrate degradation; L-arabinose degradation via L-ribulose; D-xylulose 5-phosphate from L-arabinose (bacterial route): step 1/3. Its function is as follows. Catalyzes the conversion of L-arabinose to L-ribulose. In Shewanella sp. (strain ANA-3), this protein is L-arabinose isomerase.